The following is a 78-amino-acid chain: Pro-glucagon (78 aa).

Belongs to the glucagon family.

It is found in the secreted. Functionally, plays a key role in glucose metabolism and homeostasis. Regulates blood glucose by increasing gluconeogenesis and decreasing glycolysis. The sequence is that of Pro-glucagon (gcg) from Atractosteus spatula (Alligator gar).